Consider the following 111-residue polypeptide: Denmotoxin (111 aa).

Positions 1–19 are cleaved as a signal peptide; that stretch reads MKTLLLAVAVVAFVCLGSA. A propeptide spanning residues 20–34 is cleaved from the precursor; that stretch reads DQLGLGRQQIDWGQG. Residue Gln-35 is modified to Pyrrolidone carboxylic acid. Disulfide bonds link Cys-44/Cys-68, Cys-47/Cys-55, Cys-61/Cys-87, Cys-91/Cys-102, and Cys-103/Cys-108.

Monomer. Expressed by the venom gland.

It localises to the secreted. In terms of biological role, this bird-specific postsynaptic neurotoxin irreversibly binds and inhibits the chick muscle alpha-1-beta-1-gamma-delta (CHRNA1-CHRNB1-CHRNG-CHNRD) nicotinic acetylcholine receptor (nAChR) 100-fold more compared with the mouse receptor. The weak binding to mouse receptor is reversible. In Boiga dendrophila (Mangrove snake), this protein is Denmotoxin.